The chain runs to 394 residues: Putative nickel insertion protein (394 aa).

The protein belongs to the LarC family.

In Syntrophotalea carbinolica (strain DSM 2380 / NBRC 103641 / GraBd1) (Pelobacter carbinolicus), this protein is Putative nickel insertion protein.